We begin with the raw amino-acid sequence, 234 residues long: FAS1 domain-containing protein AFUA_8G05360 (234 aa).

The first 21 residues, 1 to 21 (MRRTLFVLFVVAFCFIGSVIA), serve as a signal peptide directing secretion. In terms of domain architecture, FAS1 spans 83–231 (KPVVSDVLPK…GELWILNSVL (149 aa)).

Its subcellular location is the vacuole. This is FAS1 domain-containing protein AFUA_8G05360 from Aspergillus fumigatus (strain ATCC MYA-4609 / CBS 101355 / FGSC A1100 / Af293) (Neosartorya fumigata).